The following is a 595-amino-acid chain: Zinc finger protein 467 (595 aa).

A disordered region spans residues 1-67 (MRETLEALSS…EEGAHTEQAE (67 aa)). Residue Lys-97 forms a Glycyl lysine isopeptide (Lys-Gly) (interchain with G-Cter in SUMO2) linkage. 6 consecutive C2H2-type zinc fingers follow at residues 160–182 (YGCG…QRLH), 188–210 (CACP…QRSH), 216–238 (FPCS…LRTH), 244–266 (YPCA…QKTH), 272–294 (FPCT…QRIH), and 300–322 (YQCA…QRVH). Residues 313 to 350 (QHLVRHQRVHQTAGPARPSPDSSASPHSTAPSPTPSFP) are disordered. The segment covering 325–343 (AGPARPSPDSSASPHSTAP) has biased composition (low complexity). 6 consecutive C2H2-type zinc fingers follow at residues 355–377 (FACS…QCLH), 431–453 (FFCP…PRVH), 459–481 (FACT…SRAH), 487–509 (FACA…QAVH), 515–537 (HACA…QAIH), and 543–565 (FSCP…QLIH). A Glycyl lysine isopeptide (Lys-Gly) (interchain with G-Cter in SUMO2) cross-link involves residue Lys-368.

Belongs to the krueppel C2H2-type zinc-finger protein family. Interacts with STAT3. Enhances STAT3 activity by keeping it in the nucleus.

The protein resides in the nucleus. Its function is as follows. Transcription factor that promotes adipocyte differentiation and suppresses osteoblast differentiation in the bone marrow. Enhances the osteoclast-supporting ability of stromal cells. Binds with STAT3 the consensus sequence 5'-CTTCTGGGAAGA-3' of the acute phase response element (APRE). Transactivates several promoters including FOS, OSM and PPARG. Recruits a histone deacetylase complex. This chain is Zinc finger protein 467 (ZNF467), found in Homo sapiens (Human).